The sequence spans 74 residues: MAPPTTIRTRDQALAPLATLDSQTNCRLKELVQWECQFKGAEYVCSPFKRLFEHCIAPDKSATNYEVTDTYTNS.

In terms of assembly, component of the mitochondrial inner membrane peptidase (IMP) complex which at least consists of IMP1, IMP2 and SOM1.

The protein resides in the mitochondrion inner membrane. Functionally, non-catalytic component of the mitochondrial inner membrane peptidase (IMP) complex. IMP catalyzes the removal of signal peptides required for the targeting of proteins from the mitochondrial matrix, across the inner membrane, into the inter-membrane space. SOM1 facilitates cleavage of a subset of IMP substrates. This is Protein SOM1, mitochondrial (SOM1) from Saccharomyces cerevisiae (strain ATCC 204508 / S288c) (Baker's yeast).